A 139-amino-acid polypeptide reads, in one-letter code: Large ribosomal subunit protein uL13 (139 aa).

It belongs to the universal ribosomal protein uL13 family. As to quaternary structure, part of the 50S ribosomal subunit.

Functionally, this protein is one of the early assembly proteins of the 50S ribosomal subunit, although it is not seen to bind rRNA by itself. It is important during the early stages of 50S assembly. In Aliarcobacter butzleri (strain RM4018) (Arcobacter butzleri), this protein is Large ribosomal subunit protein uL13.